A 194-amino-acid chain; its full sequence is Peptidyl-tRNA hydrolase (194 aa).

TRNA is bound at residue tyrosine 17. Histidine 22 functions as the Proton acceptor in the catalytic mechanism. Residues phenylalanine 68, asparagine 70, and asparagine 116 each contribute to the tRNA site.

Belongs to the PTH family. As to quaternary structure, monomer.

It localises to the cytoplasm. It carries out the reaction an N-acyl-L-alpha-aminoacyl-tRNA + H2O = an N-acyl-L-amino acid + a tRNA + H(+). Its function is as follows. Hydrolyzes ribosome-free peptidyl-tRNAs (with 1 or more amino acids incorporated), which drop off the ribosome during protein synthesis, or as a result of ribosome stalling. Functionally, catalyzes the release of premature peptidyl moieties from peptidyl-tRNA molecules trapped in stalled 50S ribosomal subunits, and thus maintains levels of free tRNAs and 50S ribosomes. The protein is Peptidyl-tRNA hydrolase of Actinobacillus succinogenes (strain ATCC 55618 / DSM 22257 / CCUG 43843 / 130Z).